Reading from the N-terminus, the 639-residue chain is Muscarinic acetylcholine receptor M3 (639 aa).

Residues 1-115 (MLTHYQLCFQ…DPLGGHAVWQ (115 aa)) are Extracellular-facing. N-linked (GlcNAc...) asparagine glycans are attached at residues asparagine 16, asparagine 44, asparagine 45, asparagine 54, asparagine 97, and asparagine 101. The helical transmembrane segment at 116–139 (VVLIAFLTGIIALVTIIGNILVIV) threads the bilayer. Topologically, residues 140-152 (SFKVNKQLKTVNN) are cytoplasmic. A helical transmembrane segment spans residues 153–173 (YFLLSLACADLIIGVISMNLF). Residues 174-190 (TTYIIMGHWALGNLACD) lie on the Extracellular side of the membrane. Cysteine 189 and cysteine 269 form a disulfide bridge. Residues 191–212 (LWLSIDYVASNASVMNLLVISF) traverse the membrane as a helical segment. The Cytoplasmic portion of the chain corresponds to 213–232 (DRYFSITRPLTYRAKRTTKR). Residues 233–255 (AGVMIGLAWIISFVLWAPAILFW) form a helical membrane-spanning segment. The Extracellular segment spans residues 256–277 (QYFVGKRTVPLDECFIQFLSEP). A helical membrane pass occupies residues 278-300 (IITFGTAIAAFYLPVTIMSILYW). Topologically, residues 301–542 (RIYKETEKRT…LIKEKKAAQT (242 aa)) are cytoplasmic. 2 disordered regions span residues 370 to 404 (PNTD…DEED) and 431 to 471 (LPSS…GGSF). Residues 382-393 (SDSWNNNDAAAS) show a composition bias toward low complexity. The span at 443 to 454 (ELQKSDTDSQEK) shows a compositional bias: basic and acidic residues. Residues 543 to 563 (LSAILFAFIITWTPYNIMVLV) traverse the membrane as a helical segment. The Extracellular portion of the chain corresponds to 564 to 576 (NTFCDCVPKTVWN). Residues 577–596 (LGYWLCYINSTVNPVCYALC) form a helical membrane-spanning segment. At 597–639 (NKMFRNTFKMLLLCQCDKRKRRKQQYQQRQSVIFHKRIPREAS) the chain is on the cytoplasmic side.

This sequence belongs to the G-protein coupled receptor 1 family. Muscarinic acetylcholine receptor subfamily. CHRM3 sub-subfamily. Brain, heart atria, and ventricle.

It localises to the cell membrane. It is found in the postsynaptic cell membrane. Functionally, the muscarinic acetylcholine receptor mediates various cellular responses, including inhibition of adenylate cyclase, breakdown of phosphoinositides and modulation of potassium channels through the action of G proteins. Primary transducing effect is Pi turnover. The polypeptide is Muscarinic acetylcholine receptor M3 (CHRM3) (Gallus gallus (Chicken)).